The chain runs to 336 residues: Dihydroorotate dehydrogenase (quinone) (336 aa).

FMN-binding positions include 62–66 (AGLDK) and Thr86. A substrate-binding site is contributed by Lys66. 111 to 115 (NRMGF) provides a ligand contact to substrate. The FMN site is built by Asn139 and Asn172. Asn172 contacts substrate. Catalysis depends on Ser175, which acts as the Nucleophile. Asn177 is a binding site for substrate. FMN-binding residues include Lys217 and Thr245. 246 to 247 (NT) serves as a coordination point for substrate. FMN contacts are provided by residues Gly268, Gly297, and 318-319 (YS).

This sequence belongs to the dihydroorotate dehydrogenase family. Type 2 subfamily. Monomer. Requires FMN as cofactor.

The protein localises to the cell membrane. It carries out the reaction (S)-dihydroorotate + a quinone = orotate + a quinol. Its pathway is pyrimidine metabolism; UMP biosynthesis via de novo pathway; orotate from (S)-dihydroorotate (quinone route): step 1/1. Its function is as follows. Catalyzes the conversion of dihydroorotate to orotate with quinone as electron acceptor. The chain is Dihydroorotate dehydrogenase (quinone) from Vibrio atlanticus (strain LGP32) (Vibrio splendidus (strain Mel32)).